Here is a 326-residue protein sequence, read N- to C-terminus: GDP-mannose transporter (326 aa).

Topologically, residues 1–4 (MEKS) are cytoplasmic. Residues 5-25 (ITNSPVLSILSYCAASILMTV) traverse the membrane as a helical segment. Topologically, residues 26 to 35 (TNKYVLSGTS) are lumenal. A helical membrane pass occupies residues 36-56 (FNLNLALLAVQSIVCLTAISI). Over 57-74 (GKSFGLCKFRSFNADEAK) the chain is Cytoplasmic. The chain crosses the membrane as a helical span at residues 75-97 (KWFPIALLLVVMIYTSSKALQFL). Over 98–100 (SIP) the chain is Lumenal. Residues 101–123 (VYTIFKNLTIILIAYGEVLWFGG) traverse the membrane as a helical segment. Over 124–129 (SVTSMA) the chain is Cytoplasmic. The helical transmembrane segment at 130–152 (LASFVLMVLSSVIAAWSDISGAI) threads the bilayer. Residues 153-163 (AVSGSATTTVT) are Lumenal-facing. A helical membrane pass occupies residues 164-184 (ALNIGYFWMMSNCFASAAFVL). The Cytoplasmic portion of the chain corresponds to 185–208 (YMRKRIKLTNFGDFDTTFYNNLLS). Residues 209–229 (IPVLLIASLLFEDWSPANLAV) form a helical membrane-spanning segment. The Lumenal segment spans residues 230–237 (NFPPESRN). A helical transmembrane segment spans residues 238-258 (LIFFSMVVSGLMSIGISYCSA). Over 259 to 268 (WCVRVTSSTT) the chain is Cytoplasmic. Residues 269 to 289 (YSMVGALNKLPLALSGIVFFG) form a helical membrane-spanning segment. Topologically, residues 290–291 (TP) are lumenal. The chain crosses the membrane as a helical span at residues 292 to 312 (ATFSSVSAIFVGFVAGIVYAV). The Cytoplasmic segment spans residues 313–326 (AQIQKKKAEAALPK).

It belongs to the TPT transporter family. SLC35D subfamily. In terms of assembly, homooligomer.

It is found in the golgi apparatus membrane. It localises to the cytoplasmic vesicle membrane. The protein resides in the endoplasmic reticulum membrane. In terms of biological role, involved in the import of GDP-mannose from the cytoplasm into the Golgi lumen. This is GDP-mannose transporter (VRG4) from Yarrowia lipolytica (strain CLIB 122 / E 150) (Yeast).